A 238-amino-acid polypeptide reads, in one-letter code: Ribonuclease PH (238 aa).

Phosphate-binding positions include R86 and 124-126 (GTR).

It belongs to the RNase PH family. As to quaternary structure, homohexameric ring arranged as a trimer of dimers.

It carries out the reaction tRNA(n+1) + phosphate = tRNA(n) + a ribonucleoside 5'-diphosphate. Phosphorolytic 3'-5' exoribonuclease that plays an important role in tRNA 3'-end maturation. Removes nucleotide residues following the 3'-CCA terminus of tRNAs; can also add nucleotides to the ends of RNA molecules by using nucleoside diphosphates as substrates, but this may not be physiologically important. Probably plays a role in initiation of 16S rRNA degradation (leading to ribosome degradation) during starvation. In Acinetobacter baumannii (strain AB307-0294), this protein is Ribonuclease PH.